A 231-amino-acid polypeptide reads, in one-letter code: Large ribosomal subunit protein uL1 (231 aa).

It belongs to the universal ribosomal protein uL1 family. Part of the 50S ribosomal subunit.

Its function is as follows. Binds directly to 23S rRNA. The L1 stalk is quite mobile in the ribosome, and is involved in E site tRNA release. Functionally, protein L1 is also a translational repressor protein, it controls the translation of the L11 operon by binding to its mRNA. The sequence is that of Large ribosomal subunit protein uL1 from Acinetobacter baumannii (strain AB307-0294).